The following is an 809-amino-acid chain: Ribonuclease Z 1 (809 aa).

The disordered stretch occupies residues 74-93 (ISSPDTYDSSSSSSTTSVSD).

It belongs to the RNase Z family. It depends on Zn(2+) as a cofactor.

It localises to the nucleus. Its subcellular location is the cytoplasm. It catalyses the reaction Endonucleolytic cleavage of RNA, removing extra 3' nucleotides from tRNA precursor, generating 3' termini of tRNAs. A 3'-hydroxy group is left at the tRNA terminus and a 5'-phosphoryl group is left at the trailer molecule.. Its function is as follows. Zinc phosphodiesterase, which displays some tRNA 3'-processing endonuclease activity. May be involved in tRNA maturation, by removing a 3'-trailer from precursor tRNA. This Schizosaccharomyces pombe (strain 972 / ATCC 24843) (Fission yeast) protein is Ribonuclease Z 1 (trz1).